The primary structure comprises 565 residues: NAD-dependent malic enzyme (565 aa).

Tyr-104 functions as the Proton donor in the catalytic mechanism. Residue Arg-157 coordinates NAD(+). Lys-175 functions as the Proton acceptor in the catalytic mechanism. A divalent metal cation-binding residues include Glu-246, Asp-247, and Asp-270. NAD(+) contacts are provided by Asp-270 and Asn-418.

This sequence belongs to the malic enzymes family. As to quaternary structure, homotetramer. The cofactor is Mg(2+). Requires Mn(2+) as cofactor.

The enzyme catalyses (S)-malate + NAD(+) = pyruvate + CO2 + NADH. It catalyses the reaction oxaloacetate + H(+) = pyruvate + CO2. This is NAD-dependent malic enzyme from Photorhabdus laumondii subsp. laumondii (strain DSM 15139 / CIP 105565 / TT01) (Photorhabdus luminescens subsp. laumondii).